A 261-amino-acid polypeptide reads, in one-letter code: MAGSLFDTSAMEKPRILILGGTTEARELARRLAEDVRYDTAISLAGRTADPRPQPVKTRIGGFGGADGLAHFVHDENIALLVDATHPFAARISHNAADAAQRTGVALIALRRPEWVPLPGDRWTAVDSVVEAVSALGDRRRRVFLAIGRQEAFHFEVAPQHSYVIRSVDPVTPPLNLPDQEAILATGPFAEADEAALLRSRQIDVIVAKNSGGSATYGKIAAARRLGIEVIMVERRKPADVPTVGSCDEALNRIAHWLAPA.

It belongs to the precorrin-6x reductase family.

It catalyses the reaction precorrin-6B + NADP(+) = precorrin-6A + NADPH + 2 H(+). The protein operates within cofactor biosynthesis; adenosylcobalamin biosynthesis; cob(II)yrinate a,c-diamide from precorrin-2 (aerobic route): step 6/10. Functionally, catalyzes the reduction of the macrocycle of precorrin-6X into precorrin-6Y. In Sinorhizobium sp, this protein is Precorrin-6A reductase (cobK).